The primary structure comprises 597 residues: Elongation factor 4 (597 aa).

Residues aspartate 2–lysine 184 enclose the tr-type G domain. Residues aspartate 14–threonine 19 and asparagine 131–aspartate 134 each bind GTP.

This sequence belongs to the TRAFAC class translation factor GTPase superfamily. Classic translation factor GTPase family. LepA subfamily.

The protein localises to the cell inner membrane. The enzyme catalyses GTP + H2O = GDP + phosphate + H(+). Functionally, required for accurate and efficient protein synthesis under certain stress conditions. May act as a fidelity factor of the translation reaction, by catalyzing a one-codon backward translocation of tRNAs on improperly translocated ribosomes. Back-translocation proceeds from a post-translocation (POST) complex to a pre-translocation (PRE) complex, thus giving elongation factor G a second chance to translocate the tRNAs correctly. Binds to ribosomes in a GTP-dependent manner. This chain is Elongation factor 4, found in Paraburkholderia xenovorans (strain LB400).